The following is a 266-amino-acid chain: Indole-3-glycerol phosphate synthase (266 aa).

It belongs to the TrpC family.

It catalyses the reaction 1-(2-carboxyphenylamino)-1-deoxy-D-ribulose 5-phosphate + H(+) = (1S,2R)-1-C-(indol-3-yl)glycerol 3-phosphate + CO2 + H2O. The protein operates within amino-acid biosynthesis; L-tryptophan biosynthesis; L-tryptophan from chorismate: step 4/5. The sequence is that of Indole-3-glycerol phosphate synthase from Opitutus terrae (strain DSM 11246 / JCM 15787 / PB90-1).